Reading from the N-terminus, the 454-residue chain is UPF0210 protein BLA_0552 (454 aa).

Belongs to the UPF0210 family. Homodimer.

The chain is UPF0210 protein BLA_0552 from Bifidobacterium animalis subsp. lactis (strain AD011).